The following is a 517-amino-acid chain: Light-independent protochlorophyllide reductase subunit B (517 aa).

D36 provides a ligand contact to [4Fe-4S] cluster. The active-site Proton donor is the D285. G420–L421 is a substrate binding site.

Belongs to the ChlB/BchB/BchZ family. Protochlorophyllide reductase is composed of three subunits; BchL, BchN and BchB. Forms a heterotetramer of two BchB and two BchN subunits. The cofactor is [4Fe-4S] cluster.

It catalyses the reaction chlorophyllide a + oxidized 2[4Fe-4S]-[ferredoxin] + 2 ADP + 2 phosphate = protochlorophyllide a + reduced 2[4Fe-4S]-[ferredoxin] + 2 ATP + 2 H2O. Its pathway is porphyrin-containing compound metabolism; bacteriochlorophyll biosynthesis (light-independent). Its function is as follows. Component of the dark-operative protochlorophyllide reductase (DPOR) that uses Mg-ATP and reduced ferredoxin to reduce ring D of protochlorophyllide (Pchlide) to form chlorophyllide a (Chlide). This reaction is light-independent. The NB-protein (BchN-BchB) is the catalytic component of the complex. The polypeptide is Light-independent protochlorophyllide reductase subunit B (Bradyrhizobium sp. (strain BTAi1 / ATCC BAA-1182)).